The primary structure comprises 129 residues: Ribosome-binding factor A (129 aa).

The protein belongs to the RbfA family. Monomer. Binds 30S ribosomal subunits, but not 50S ribosomal subunits or 70S ribosomes.

Its subcellular location is the cytoplasm. One of several proteins that assist in the late maturation steps of the functional core of the 30S ribosomal subunit. Associates with free 30S ribosomal subunits (but not with 30S subunits that are part of 70S ribosomes or polysomes). Required for efficient processing of 16S rRNA. May interact with the 5'-terminal helix region of 16S rRNA. The polypeptide is Ribosome-binding factor A (Ectopseudomonas mendocina (strain ymp) (Pseudomonas mendocina)).